Consider the following 779-residue polypeptide: Probable ATP-dependent RNA helicase DHX40 (779 aa).

Residues 1 to 53 (MSRFPAVAGRAPRRQEEGERPVELQEERPSAVRIADREEKGCTSQEGGTTPTF) are disordered. Positions 13–41 (RRQEEGERPVELQEERPSAVRIADREEKG) are enriched in basic and acidic residues. The segment covering 42–53 (CTSQEGGTTPTF) has biased composition (polar residues). The Helicase ATP-binding domain maps to 63–231 (IQAVRDNSFL…FGNCPIFDIP (169 aa)). Residue 76 to 83 (GNTGSGKT) coordinates ATP. The short motif at 173–176 (DEAH) is the DEAH box element. A Helicase C-terminal domain is found at 263 to 442 (TMDIHLNEMA…SVVLTLKCLA (180 aa)).

It belongs to the DEAD box helicase family. DEAH subfamily.

It catalyses the reaction ATP + H2O = ADP + phosphate + H(+). Its function is as follows. Probable ATP-dependent RNA helicase. The chain is Probable ATP-dependent RNA helicase DHX40 (Dhx40) from Rattus norvegicus (Rat).